The primary structure comprises 449 residues: Nuclear hormone receptor family member nhr-43 (449 aa).

Positions 44 to 122 (NIHCRVCERR…VGLNVDAVVG (79 aa)) form a DNA-binding region, nuclear receptor. 2 NR C4-type zinc fingers span residues 47-68 (CRVC…CRAC) and 84-105 (CRRG…CQKC). Basic and acidic residues predominate over residues 125–142 (SPDHVKTTSRDESVKKED). The segment at 125–154 (SPDHVKTTSRDESVKKEDEESDTGSEGKSC) is disordered. An NR LBD domain is found at 200–449 (NYNEFTKSRL…SDLNAYLYSI (250 aa)).

It localises to the nucleus. In terms of biological role, ligand-activated transcription factor. Positively modulates expression of homeobox protein lin-39, perhaps by binding to the sequence motif 5'-TGAC-3' in regulatory regions of the lin-39 gene, acting in the embryo, and also in the vulval lineage. The sequence is that of Nuclear hormone receptor family member nhr-43 from Caenorhabditis elegans.